Consider the following 313-residue polypeptide: Ribosomal RNA small subunit methyltransferase H (313 aa).

Residues 37–39 (GGH), Asp-57, Phe-82, Asp-104, and Gln-111 contribute to the S-adenosyl-L-methionine site.

It belongs to the methyltransferase superfamily. RsmH family.

It localises to the cytoplasm. The catalysed reaction is cytidine(1402) in 16S rRNA + S-adenosyl-L-methionine = N(4)-methylcytidine(1402) in 16S rRNA + S-adenosyl-L-homocysteine + H(+). Its function is as follows. Specifically methylates the N4 position of cytidine in position 1402 (C1402) of 16S rRNA. This chain is Ribosomal RNA small subunit methyltransferase H, found in Alteromonas mediterranea (strain DSM 17117 / CIP 110805 / LMG 28347 / Deep ecotype).